The following is a 766-amino-acid chain: Signal transducer and activator of transcription 3.2 (766 aa).

The Essential for nuclear import motif lies at 150–162 (DVRKKVQDLEQKM). The SH2 domain occupies 580–670 (WNEGYIIGFI…DATNILVSPL (91 aa)). S725 carries the phosphoserine; by NLK modification.

This sequence belongs to the transcription factor STAT family. In terms of assembly, forms a homodimer or a heterodimer with a related family member. Interacts with nlk.2. Phosphorylation of both tyrosine and serine residues, together with dimerization, is required for mesoderm induction.

It is found in the cytoplasm. Its subcellular location is the nucleus. Functionally, transcription factor that binds to target promoter sequences and activates transcription upon il6st/gp130 stimulation. Mediates ventralization of embryos, at least in part via inhibition of smad2 signaling. Required for hairy2 to induce dll1/delta1 and promote neural crest cell proliferation and differentiation. Involved in TGFbeta-mediated mesoderm induction in early embryos, acting downstream of map3k7/tak1 and nlk.2. The chain is Signal transducer and activator of transcription 3.2 (stat3.2) from Xenopus laevis (African clawed frog).